A 547-amino-acid polypeptide reads, in one-letter code: CAP-Gly domain-containing linker protein 3 (547 aa).

The disordered stretch occupies residues 1-49; it reads MTKTDPAPMAPPPRGEEEEEEEEDEPVPEAPSPTQERRQKPVVHPSAPA. Residues 16–27 are compositionally biased toward acidic residues; it reads EEEEEEEEDEPV. ANK repeat units lie at residues 117-155, 160-189, and 197-226; these read TDMT…DVTL, TNMN…PRVV, and NHGS…NPAL. One can recognise a CAP-Gly 1 domain in the interval 314 to 356; the sequence is GTTEFASGQWVGVELDEPEGKNDGSVGGVRYFICPPKQGLFAS. The interval 365–413 is disordered; sequence DAPPSSVTSTPRTPRMDFSRVTGKGRREHKGKKKTPSSPSLGSLQQRDR. A compositionally biased stretch (low complexity) spans 367-377; it reads PPSSVTSTPRT. Residue threonine 374 is modified to Phosphothreonine. A compositionally biased stretch (basic residues) spans 387-399; the sequence is GKGRREHKGKKKT. The segment covering 400–409 has biased composition (polar residues); sequence PSSPSLGSLQ. Position 401 is a phosphoserine (serine 401). The CAP-Gly 2 domain occupies 436–478; the sequence is GKTDFAPGYWYGIELDQPTGKHDGSVFGVRYFTCPPRHGVFAP. The interval 488–547 is goLD; sequence STDSPGDSVGAKKVHQVTMTQPKRTFTTVRTPKDIASENSISRLLFCCWFPWMLRAEMQS. Residues cysteine 534 and cysteine 535 are each lipidated (S-palmitoyl cysteine).

In terms of assembly, homodimer. Interacts with AKT1 and AKT2; when AKT1 and AKT2 are phosphorylated and activated, affinity is higher for AKT2. Interacts with ZDHHC13 (via ANK repeats). Interacts with ZDHHC17 (via ANK repeats). Post-translationally, palmitoylation by ZDHHC17 regulates association with the plasma membrane.

It localises to the cell membrane. It is found in the cytoplasm. The protein resides in the golgi apparatus. The protein localises to the golgi stack. Its function is as follows. Functions as a cytoplasmic linker protein. Involved in TGN-endosome dynamics. May modulate the cellular compartmentalization of AKT kinase family and promote its cell membrane localization, thereby playing a role in glucose transport in adipocytes. This is CAP-Gly domain-containing linker protein 3 (CLIP3) from Pongo abelii (Sumatran orangutan).